A 119-amino-acid polypeptide reads, in one-letter code: Holo-[acyl-carrier-protein] synthase (119 aa).

Mg(2+)-binding residues include Asp8 and Glu58.

This sequence belongs to the P-Pant transferase superfamily. AcpS family. It depends on Mg(2+) as a cofactor.

It localises to the cytoplasm. The enzyme catalyses apo-[ACP] + CoA = holo-[ACP] + adenosine 3',5'-bisphosphate + H(+). Transfers the 4'-phosphopantetheine moiety from coenzyme A to a Ser of acyl-carrier-protein. The protein is Holo-[acyl-carrier-protein] synthase of Streptococcus thermophilus (strain ATCC BAA-491 / LMD-9).